Consider the following 456-residue polypeptide: Argininosuccinate lyase (456 aa).

This sequence belongs to the lyase 1 family. Argininosuccinate lyase subfamily.

It is found in the cytoplasm. It catalyses the reaction 2-(N(omega)-L-arginino)succinate = fumarate + L-arginine. It participates in amino-acid biosynthesis; L-arginine biosynthesis; L-arginine from L-ornithine and carbamoyl phosphate: step 3/3. The polypeptide is Argininosuccinate lyase (Shewanella pealeana (strain ATCC 700345 / ANG-SQ1)).